A 121-amino-acid polypeptide reads, in one-letter code: uncharacterized protein (121 aa).

This is an uncharacterized protein from Schizosaccharomyces pombe (strain 972 / ATCC 24843) (Fission yeast).